We begin with the raw amino-acid sequence, 469 residues long: Aspartyl/glutamyl-tRNA(Asn/Gln) amidotransferase subunit B (469 aa).

It belongs to the GatB/GatE family. GatB subfamily. In terms of assembly, heterotrimer of A, B and C subunits.

It carries out the reaction L-glutamyl-tRNA(Gln) + L-glutamine + ATP + H2O = L-glutaminyl-tRNA(Gln) + L-glutamate + ADP + phosphate + H(+). The catalysed reaction is L-aspartyl-tRNA(Asn) + L-glutamine + ATP + H2O = L-asparaginyl-tRNA(Asn) + L-glutamate + ADP + phosphate + 2 H(+). Functionally, allows the formation of correctly charged Asn-tRNA(Asn) or Gln-tRNA(Gln) through the transamidation of misacylated Asp-tRNA(Asn) or Glu-tRNA(Gln) in organisms which lack either or both of asparaginyl-tRNA or glutaminyl-tRNA synthetases. The reaction takes place in the presence of glutamine and ATP through an activated phospho-Asp-tRNA(Asn) or phospho-Glu-tRNA(Gln). This chain is Aspartyl/glutamyl-tRNA(Asn/Gln) amidotransferase subunit B, found in Methanococcus vannielii (strain ATCC 35089 / DSM 1224 / JCM 13029 / OCM 148 / SB).